The primary structure comprises 255 residues: MASSDLEQLCSHVNEKIGNIKKTLSLRNCGQEPTLKTVLNKIGDEIIVINELLNKLELEIQYQEQTNNSLKELCESLEEDYKDIEHLKENVPSHLPQVTVTQSCVKGSDLDPEEPIKVEEPEPVKKPPKEQRSIKEMPFITCDEFNGVPSYMKSRLTYNQINDVIKEINKAVISKYKILHQPKKSMNSVTRNLYHRFIDEETKDTKGRYFIVEADIKEFTTLKADKKFHVLLNILRHCRRLSEVRGGGLTRYVIT.

At Ala2 the chain carries N-acetylalanine. Positions 49–91 (INELLNKLELEIQYQEQTNNSLKELCESLEEDYKDIEHLKENV) form a coiled coil. Residues 92–132 (PSHLPQVTVTQSCVKGSDLDPEEPIKVEEPEPVKKPPKEQR) are flexiple loop that anchors MAPRE1. The SXLP motif; mediates interaction with MAPRE1, targeting to microtubule plus ends, stabilization on kinetochores and is required for proper chromosome alignment to the metaphase plate motif lies at 93–96 (SHLP). Positions 106–131 (KGSDLDPEEPIKVEEPEPVKKPPKEQ) are disordered. The span at 114-131 (EPIKVEEPEPVKKPPKEQ) shows a compositional bias: basic and acidic residues. Positions 132–255 (RSIKEMPFIT…GGGLTRYVIT (124 aa)) are binds microtubules and protein phosphatase PP1 subunit PPP1CA. At Thr157 the chain carries Phosphothreonine; by AURKB. Ser242 is modified (phosphoserine; by AURKB).

The protein belongs to the SKA1 family. In terms of assembly, component of the SKA complex, composed of SKA1, SKA2 and SKA3. The SKA complex is a homodimer organized around a central W-shaped coiled-coil structure, formed by the interacting domains of SKA1, SKA2, and SKA3, each end of the 'W' is extended further by the C-terminal microtubule-binding domains of SKA1 and SKA3; the complex forms extended structures on microtubules. Interacts (via SXLP motif) with MAPRE1 (via C-terminus); the interaction is direct and stabilizes the kinetochore-microtubule attachment of the SKA1 complex. Interacts (via C-terminus) with protein phosphatase PP1 subunit PPP1CA; the interaction is direct and required for recruitment of PPP1CA to the kinetochore. Interacts with the NDC80 complex; the interaction is required to establish kinetochore-microtubule end-on attachments. In terms of processing, phosphorylated by AURKB at Thr-157 and Ser-242 which negatively regulates the association of the SKA complex with kinetochores to allow correction of aberrant kinetochore-microtubule interactions and promote mitotic sister chromatid biorientation.

It localises to the cytoplasm. Its subcellular location is the cytoskeleton. It is found in the spindle. The protein localises to the chromosome. The protein resides in the centromere. It localises to the kinetochore. Its subcellular location is the microtubule organizing center. It is found in the centrosome. Its function is as follows. Component of the SKA complex, a microtubule plus end-binding complex of the outer kinetochore that stabilizes spindle microtubule-kinetochore attachments, promotes alignment of chromosomes at the mitotic spindle equator (chromosome congression) and assists suppression of the spindle assembly checkpoint. Kinetochores, consisting of a centromere-associated inner segment and a microtubule-contacting outer segment, play a crucial role in chromosome segregation by mediating the physical connection between centromeric DNA and spindle microtubules. The outer kinetochore is made up of the ten-subunit KMN network complex, comprising the MIS12, NDC80 and KNL1 complexes, and auxiliary microtubule-associated components such as the SKA complex; together they connect the outer kinetochore with the inner kinetochore, bind microtubules, and mediate interactions with mitotic checkpoint proteins that delay anaphase until chromosomes are bioriented on the spindle. The SKA complex is loaded onto bioriented kinetochores and it facilitates chromosome congression by stabilizing microtubules together with MAPRE1, and end-on attachment of the NDC80 complex to depolymerizing spindle microtubules, thereby assisting the poleward-moving kinetochore in withstanding microtubule pulling forces. The complex associates with dynamic microtubule plus-ends and can track both depolymerizing and elongating microtubules. The complex recruits protein phosphatase 1 (PP1) to the kinetochore in prometaphase and metaphase, to oppose spindle assembly checkpoint signaling and promote the onset of anaphase. In the complex, it mediates interactions with microtubules. It also stimulates AURKB/Aurora B catalytic activity. During meiosis the SKA complex stabilizes the meiotic spindle and is required for its migration to the cortex. The sequence is that of SKA complex subunit 1 (SKA1) from Homo sapiens (Human).